Here is a 99-residue protein sequence, read N- to C-terminus: Malonate decarboxylase acyl carrier protein (99 aa).

Position 25 is an O-(phosphoribosyl dephospho-coenzyme A)serine (Ser-25).

This sequence belongs to the MdcC family. In terms of processing, covalently binds the prosthetic group of malonate decarboxylase.

It localises to the cytoplasm. In terms of biological role, subunit of malonate decarboxylase, it is an acyl carrier protein to which acetyl and malonyl thioester residues are bound via a 2'-(5''-phosphoribosyl)-3'-dephospho-CoA prosthetic group and turn over during the catalytic mechanism. This is Malonate decarboxylase acyl carrier protein from Pseudomonas putida (strain GB-1).